Here is a 493-residue protein sequence, read N- to C-terminus: Glutamate--tRNA ligase (493 aa).

A 'HIGH' region motif is present at residues 10-20 (PSPTGDPHVGT). The 'KMSKS' region motif lies at 251–255 (KLSKR). Lys254 is a binding site for ATP.

This sequence belongs to the class-I aminoacyl-tRNA synthetase family. Glutamate--tRNA ligase type 1 subfamily. In terms of assembly, monomer.

Its subcellular location is the cytoplasm. The enzyme catalyses tRNA(Glu) + L-glutamate + ATP = L-glutamyl-tRNA(Glu) + AMP + diphosphate. In terms of biological role, catalyzes the attachment of glutamate to tRNA(Glu) in a two-step reaction: glutamate is first activated by ATP to form Glu-AMP and then transferred to the acceptor end of tRNA(Glu). This chain is Glutamate--tRNA ligase, found in Pseudomonas putida (strain ATCC 700007 / DSM 6899 / JCM 31910 / BCRC 17059 / LMG 24140 / F1).